Consider the following 250-residue polypeptide: Uracil-DNA glycosylase (250 aa).

Asp91 acts as the Proton acceptor in catalysis.

The protein belongs to the uracil-DNA glycosylase (UDG) superfamily. UNG family.

It localises to the host nucleus. It carries out the reaction Hydrolyzes single-stranded DNA or mismatched double-stranded DNA and polynucleotides, releasing free uracil.. Excises uracil residues from the DNA which can arise as a result of misincorporation of dUMP residues by DNA polymerase or due to deamination of cytosine. Functionally, excises uracil residues from the DNA which can arise as a result of misincorporation of dUMP residues by DNA polymerase or deamination of cytosines. Therefore may reduce deleterious uracil incorporation into the viral genome, particularly in terminally differentiated cells which lack DNA repair enzymes. The sequence is that of Uracil-DNA glycosylase (UL114) from Homo sapiens (Human).